Here is a 239-residue protein sequence, read N- to C-terminus: Ribosomal RNA small subunit methyltransferase G (239 aa).

Residues Gly78, Phe83, 129–130 (AE), and Arg148 contribute to the S-adenosyl-L-methionine site.

This sequence belongs to the methyltransferase superfamily. RNA methyltransferase RsmG family.

It localises to the cytoplasm. Specifically methylates the N7 position of a guanine in 16S rRNA. The sequence is that of Ribosomal RNA small subunit methyltransferase G from Clostridium botulinum (strain ATCC 19397 / Type A).